The sequence spans 229 residues: UPF0758 protein CLH_0547 (229 aa).

Residues 107–229 (KIMSPNDIAM…FISLKEKGFI (123 aa)) enclose the MPN domain. Positions 178, 180, and 191 each coordinate Zn(2+). Positions 178 to 191 (HNHPSGDPTPSKED) match the JAMM motif motif.

Belongs to the UPF0758 family.

This chain is UPF0758 protein CLH_0547, found in Clostridium botulinum (strain Alaska E43 / Type E3).